Consider the following 422-residue polypeptide: Protein FAM53B (422 aa).

Ser119, Ser168, Ser170, Ser180, Ser213, and Ser269 each carry phosphoserine. Disordered stretches follow at residues 193-225 (GQPCQGAPGSAPCGQAGDSWSPDPHPVGGGRLD) and 243-269 (CPPSANSTPASTPELARRSSGLARSRS). Residues 244 to 269 (PPSANSTPASTPELARRSSGLARSRS) are compositionally biased toward low complexity. The Nuclear localization signal motif lies at 282–285 (KRRR). 2 positions are modified to phosphoserine: Ser335 and Ser344.

It belongs to the FAM53 family. In terms of assembly, interacts with CTNNB1.

Its subcellular location is the nucleus. Acts as a regulator of Wnt signaling pathway by regulating beta-catenin (CTNNB1) nuclear localization. The protein is Protein FAM53B of Mus musculus (Mouse).